The primary structure comprises 113 residues: MPQNRKLGRDSAHRNLMLRNLVTSLFKSGRIQTTEPKAKETRRAAEKMITLAKRGDLHARRQALAYMTEETVVTNLFEEIAPKYQDRNGGYTRIMKLGPRQGDAAEVCILELV.

Belongs to the bacterial ribosomal protein bL17 family. In terms of assembly, part of the 50S ribosomal subunit. Contacts protein L32.

In Alkaliphilus metalliredigens (strain QYMF), this protein is Large ribosomal subunit protein bL17.